The chain runs to 342 residues: N-acetyl-gamma-glutamyl-phosphate reductase (342 aa).

The active site involves Cys-149.

The protein belongs to the NAGSA dehydrogenase family. Type 1 subfamily.

It localises to the cytoplasm. The catalysed reaction is N-acetyl-L-glutamate 5-semialdehyde + phosphate + NADP(+) = N-acetyl-L-glutamyl 5-phosphate + NADPH + H(+). It participates in amino-acid biosynthesis; L-arginine biosynthesis; N(2)-acetyl-L-ornithine from L-glutamate: step 3/4. Its function is as follows. Catalyzes the NADPH-dependent reduction of N-acetyl-5-glutamyl phosphate to yield N-acetyl-L-glutamate 5-semialdehyde. The polypeptide is N-acetyl-gamma-glutamyl-phosphate reductase (Nitrosomonas europaea (strain ATCC 19718 / CIP 103999 / KCTC 2705 / NBRC 14298)).